The following is a 387-amino-acid chain: Queuine tRNA-ribosyltransferase (387 aa).

Aspartate 105 acts as the Proton acceptor in catalysis. Residues aspartate 105–phenylalanine 109, aspartate 177, and glycine 248 each bind substrate. Residues glycine 278 to serine 284 form an RNA binding region. The active-site Nucleophile is the aspartate 297. Positions threonine 302 to arginine 306 are RNA binding; important for wobble base 34 recognition. The Zn(2+) site is built by cysteine 335, cysteine 337, cysteine 340, and histidine 366.

It belongs to the queuine tRNA-ribosyltransferase family. As to quaternary structure, homodimer. Within each dimer, one monomer is responsible for RNA recognition and catalysis, while the other monomer binds to the replacement base PreQ1. It depends on Zn(2+) as a cofactor.

The enzyme catalyses 7-aminomethyl-7-carbaguanine + guanosine(34) in tRNA = 7-aminomethyl-7-carbaguanosine(34) in tRNA + guanine. Its pathway is tRNA modification; tRNA-queuosine biosynthesis. Catalyzes the base-exchange of a guanine (G) residue with the queuine precursor 7-aminomethyl-7-deazaguanine (PreQ1) at position 34 (anticodon wobble position) in tRNAs with GU(N) anticodons (tRNA-Asp, -Asn, -His and -Tyr). Catalysis occurs through a double-displacement mechanism. The nucleophile active site attacks the C1' of nucleotide 34 to detach the guanine base from the RNA, forming a covalent enzyme-RNA intermediate. The proton acceptor active site deprotonates the incoming PreQ1, allowing a nucleophilic attack on the C1' of the ribose to form the product. After dissociation, two additional enzymatic reactions on the tRNA convert PreQ1 to queuine (Q), resulting in the hypermodified nucleoside queuosine (7-(((4,5-cis-dihydroxy-2-cyclopenten-1-yl)amino)methyl)-7-deazaguanosine). In Protochlamydia amoebophila (strain UWE25), this protein is Queuine tRNA-ribosyltransferase.